The chain runs to 72 residues: Cold shock-like protein CspD (72 aa).

In terms of domain architecture, CSD spans 4 to 64; that stretch reads GIVKWFNNAK…SDKGSHATKI (61 aa).

The protein localises to the cytoplasm. The sequence is that of Cold shock-like protein CspD (cspD) from Haemophilus influenzae (strain ATCC 51907 / DSM 11121 / KW20 / Rd).